The primary structure comprises 126 residues: Aspartate 1-decarboxylase (126 aa).

Catalysis depends on Ser25, which acts as the Schiff-base intermediate with substrate; via pyruvic acid. Position 25 is a pyruvic acid (Ser) (Ser25). Thr57 serves as a coordination point for substrate. Tyr58 acts as the Proton donor in catalysis. Position 73–75 (73–75 (GSA)) interacts with substrate.

Belongs to the PanD family. As to quaternary structure, heterooctamer of four alpha and four beta subunits. Requires pyruvate as cofactor. Post-translationally, is synthesized initially as an inactive proenzyme, which is activated by self-cleavage at a specific serine bond to produce a beta-subunit with a hydroxyl group at its C-terminus and an alpha-subunit with a pyruvoyl group at its N-terminus.

It is found in the cytoplasm. The catalysed reaction is L-aspartate + H(+) = beta-alanine + CO2. It functions in the pathway cofactor biosynthesis; (R)-pantothenate biosynthesis; beta-alanine from L-aspartate: step 1/1. Functionally, catalyzes the pyruvoyl-dependent decarboxylation of aspartate to produce beta-alanine. This Acidovorax ebreus (strain TPSY) (Diaphorobacter sp. (strain TPSY)) protein is Aspartate 1-decarboxylase.